A 108-amino-acid polypeptide reads, in one-letter code: uncharacterized protein (108 aa).

A compositionally biased stretch (low complexity) spans 39 to 68 (GLRSRSGTGSGNSRNGLKESGGSRSGPGKP). A disordered region spans residues 39-95 (GLRSRSGTGSGNSRNGLKESGGSRSGPGKPRGNRKSSRRIRPRPTSEKPRGYWRSSW). Positions 69–80 (RGNRKSSRRIRP) are enriched in basic residues.

This is an uncharacterized protein from Acidithiobacillus ferridurans.